The primary structure comprises 264 residues: Thymidylate synthase 2 (264 aa).

Residue Arg-21 participates in dUMP binding. Residue His-51 participates in (6R)-5,10-methylene-5,6,7,8-tetrahydrofolate binding. 126–127 (RR) contacts dUMP. The active-site Nucleophile is Cys-146. Residues 166-169 (RSAD), Asn-177, and 207-209 (HIY) each bind dUMP. Asp-169 lines the (6R)-5,10-methylene-5,6,7,8-tetrahydrofolate pocket. Ser-263 lines the (6R)-5,10-methylene-5,6,7,8-tetrahydrofolate pocket.

Belongs to the thymidylate synthase family. Bacterial-type ThyA subfamily. As to quaternary structure, homodimer.

It is found in the cytoplasm. The enzyme catalyses dUMP + (6R)-5,10-methylene-5,6,7,8-tetrahydrofolate = 7,8-dihydrofolate + dTMP. The protein operates within pyrimidine metabolism; dTTP biosynthesis. Functionally, catalyzes the reductive methylation of 2'-deoxyuridine-5'-monophosphate (dUMP) to 2'-deoxythymidine-5'-monophosphate (dTMP) while utilizing 5,10-methylenetetrahydrofolate (mTHF) as the methyl donor and reductant in the reaction, yielding dihydrofolate (DHF) as a by-product. This enzymatic reaction provides an intracellular de novo source of dTMP, an essential precursor for DNA biosynthesis. The chain is Thymidylate synthase 2 from Bacillus amyloliquefaciens (Bacillus velezensis).